The following is a 331-amino-acid chain: Aspartate carbamoyltransferase catalytic subunit (331 aa).

2 residues coordinate carbamoyl phosphate: Arg-62 and Thr-63. Residue Lys-90 participates in L-aspartate binding. Carbamoyl phosphate contacts are provided by Arg-112, His-145, and Gln-148. L-aspartate-binding residues include Arg-185 and Arg-246. Residues Gly-287 and Pro-288 each contribute to the carbamoyl phosphate site.

The protein belongs to the aspartate/ornithine carbamoyltransferase superfamily. ATCase family. Heterododecamer (2C3:3R2) of six catalytic PyrB chains organized as two trimers (C3), and six regulatory PyrI chains organized as three dimers (R2).

It carries out the reaction carbamoyl phosphate + L-aspartate = N-carbamoyl-L-aspartate + phosphate + H(+). It participates in pyrimidine metabolism; UMP biosynthesis via de novo pathway; (S)-dihydroorotate from bicarbonate: step 2/3. Its function is as follows. Catalyzes the condensation of carbamoyl phosphate and aspartate to form carbamoyl aspartate and inorganic phosphate, the committed step in the de novo pyrimidine nucleotide biosynthesis pathway. The polypeptide is Aspartate carbamoyltransferase catalytic subunit (Synechocystis sp. (strain ATCC 27184 / PCC 6803 / Kazusa)).